A 247-amino-acid chain; its full sequence is Diglucosylglycerate octanoyltransferase (247 aa).

The protein belongs to the OctT acyltransferase family. In terms of assembly, homotetramer.

It carries out the reaction (2R)-2-O-[alpha-D-glucopyranosyl-(1-&gt;6)-alpha-D-glucopyranosyl]-glycerate + octanoyl-CoA = (2R)-2-O-[6-O-octanoyl-alpha-D-glucopyranosyl-(1-&gt;6)-alpha-D-glucopyranosyl]-glycerate + CoA. Sugar octanoyltransferase likely involved in the biosynthesis of mycobacterial methylglucose lipopolysaccharide (MGLP). Catalyzes the transfer of an octanoyl group from octanoyl-CoA to the C6 OH of the second glucose in diglucosylglycerate (DGG). DGG is the preferred acceptor, but to a lesser extent, GG (glucosylglycerate) can also be used as substrate. DGG and GG are the two earliest intermediates in MGLP biosynthesis. This chain is Diglucosylglycerate octanoyltransferase, found in Mycobacterium tuberculosis (strain ATCC 25618 / H37Rv).